A 237-amino-acid chain; its full sequence is UPF0758 protein Aave_3773 (237 aa).

Positions Leu115–Ile237 constitute an MPN domain. The Zn(2+) site is built by His186, His188, and Asp199. The short motif at His186–Asp199 is the JAMM motif element.

Belongs to the UPF0758 family.

The sequence is that of UPF0758 protein Aave_3773 from Paracidovorax citrulli (strain AAC00-1) (Acidovorax citrulli).